A 389-amino-acid chain; its full sequence is Spore coat polysaccharide biosynthesis protein SpsC (389 aa).

K187 carries the post-translational modification N6-(pyridoxal phosphate)lysine.

The protein belongs to the DegT/DnrJ/EryC1 family. It depends on pyridoxal 5'-phosphate as a cofactor.

It functions in the pathway spore coat biogenesis; spore coat polysaccharide biosynthesis. The sequence is that of Spore coat polysaccharide biosynthesis protein SpsC (spsC) from Bacillus subtilis (strain 168).